Here is a 499-residue protein sequence, read N- to C-terminus: Potassium voltage-gated channel subfamily A member 2 (499 aa).

The disordered stretch occupies residues 1–26; it reads MTVATEDPADEAAALPGHPQDTYDPE. Residues 1-125 form a tetramerization domain region; sequence MTVATEDPAD…YELGEEAMEM (125 aa). Over 1-160 the chain is Cytoplasmic; the sequence is MTVATEDPAD…LLFEYPESSG (160 aa). A helical membrane pass occupies residues 161-182; that stretch reads PARIIAIVSVMVILISIVSFCL. The Extracellular portion of the chain corresponds to 183–221; that stretch reads ETLPIFRDENEDMHGSGMTFHTYSNSTAGYQQSTSFTDP. N207 is a glycosylation site (N-linked (GlcNAc...) asparagine). A helical transmembrane segment spans residues 222–243; the sequence is FFIVETLCIIWFSFEFLVRFFA. Residue C244 is the site of S-palmitoyl cysteine attachment. At 244 to 254 the chain is on the cytoplasmic side; it reads CPSKAGFFTNI. A helical membrane pass occupies residues 255-275; the sequence is MNIIDIVAIIPYFITLGTELA. Over 276–289 the chain is Extracellular; it reads EKPEDAQQGQQAMS. The chain crosses the membrane as a helical; Voltage-sensor span at residues 290–310; sequence LAILRVIRLVRVFRIFKLSRH. Topologically, residues 311-325 are cytoplasmic; the sequence is SKGLQILGQTLKASM. Residues 312-325 form an S4-S5 linker region; it reads KGLQILGQTLKASM. A helical membrane pass occupies residues 326 to 347; the sequence is RELGLLIFFLFIGVILFSSAVY. Over 348–361 the chain is Extracellular; it reads FAEADERDSQFPSI. Positions 362–373 form an intramembrane region, helical; that stretch reads PDAFWWAVVSMT. The Selectivity filter signature appears at 374–379; the sequence is TVGYGD. An intramembrane segment occupies 374-381; sequence TVGYGDMV. The Extracellular segment spans residues 382–388; sequence PTTIGGK. Residues 389-417 form a helical membrane-spanning segment; the sequence is IVGSLCAIAGVLTIALPVPVIVSNFNYFY. The Cytoplasmic segment spans residues 418-499; that stretch reads HRETEGEEQA…VNITKMLTDV (82 aa). Y429 bears the Phosphotyrosine mark. Phosphoserine is present on residues S434, S440, S441, and S449. Y458 is modified (phosphotyrosine). At S468 the chain carries Phosphoserine. A PDZ-binding motif is present at residues 497 to 499; the sequence is TDV.

The protein belongs to the potassium channel family. A (Shaker) (TC 1.A.1.2) subfamily. Kv1.2/KCNA2 sub-subfamily. Homotetramer and heterotetramer with other channel-forming alpha subunits, such as KCNA1, KCNA4, KCNA5, KCNA6 and KCNA7. Channel activity is regulated by interaction with the beta subunits, including KCNAB1 and KCNAB2. Identified in a complex with KCNA1 and KCNAB2. Identified in a complex with KCNA4 and FYN. Identified in a complex with KCNA5 and KCNAB1. Interacts with the beta subunit KCNAB1. Interacts with PTK2B. Interacts (via C-terminus) with CTTN. Interacts (via N-terminal cytoplasmic domain) with RHOA (GTP-bound form); this regulates channel activity by reducing location at the cell surface in response to CHRM1 activation. Interacts with DRD2. Interacts with SIGMAR1; cocaine consumption leads to increased interaction. Interacts with ADAM22. Interacts with CNTNAP2. Interacts (via C-terminus) with the PDZ domains of DLG1, DLG2 and DLG4. Interacts with ADAM11. Interacts with LYNX1. In terms of processing, phosphorylated on tyrosine residues; phosphorylation increases in response to ischemia. Phosphorylated on tyrosine residues by activated PTK2B/PYK2. Phosphorylation on tyrosine residues suppresses ion channel activity. Phosphorylated on tyrosine residues in response to CHRM1 activation; this abolishes interaction with CTTN. This is probably due to endocytosis of the phosphorylated channel subunits. Phosphorylated on serine residues in response to increased cAMP levels; phosphorylation is apparently not catalyzed by PKA. N-glycosylated, with complex, sialylated N-glycans. As to expression, detected in portal vein myocytes (at protein level). Detected in portal vein. Brain, liver and kidney.

It is found in the cell membrane. The protein resides in the membrane. It localises to the cell projection. The protein localises to the axon. Its subcellular location is the synapse. It is found in the presynaptic cell membrane. The protein resides in the synaptosome. It localises to the endoplasmic reticulum membrane. The protein localises to the dendrite. Its subcellular location is the lamellipodium membrane. It is found in the cell junction. The protein resides in the paranodal septate junction. It carries out the reaction K(+)(in) = K(+)(out). Inhibited by 4-aminopyridine (4-AP). Inhibited by dendrotoxin (DTX) and charybdotoxin (CTX), but not by tetraethylammonium (TEA). Inhibited by tityustoxin-K alpha (TsTX-Kalpha), a toxin that is highly specific for KCNA2. Inhibited by maurotoxin. Inhibited by kappaM conotoxins kappaM-RIIIJ and kappaM-RIIIK. Its function is as follows. Voltage-gated potassium channel that mediates transmembrane potassium transport in excitable membranes, primarily in the brain and the central nervous system, but also in the cardiovascular system. Prevents aberrant action potential firing and regulates neuronal output. Forms tetrameric potassium-selective channels through which potassium ions pass in accordance with their electrochemical gradient. The channel alternates between opened and closed conformations in response to the voltage difference across the membrane. Can form functional homotetrameric channels and heterotetrameric channels that contain variable proportions of KCNA1, KCNA2, KCNA4, KCNA5, KCNA6, KCNA7, and possibly other family members as well; channel properties depend on the type of alpha subunits that are part of the channel. Channel properties are modulated by cytoplasmic beta subunits that regulate the subcellular location of the alpha subunits and promote rapid inactivation of delayed rectifier potassium channels. In vivo, membranes probably contain a mixture of heteromeric potassium channel complexes, making it difficult to assign currents observed in intact tissues to any particular potassium channel family member. Homotetrameric KCNA2 forms a delayed-rectifier potassium channel that opens in response to membrane depolarization, followed by slow spontaneous channel closure. In contrast, a heteromultimer formed by KCNA2 and KCNA4 shows rapid inactivation. Regulates neuronal excitability and plays a role as pacemaker in the regulation of neuronal action potentials. KCNA2-containing channels play a presynaptic role and prevent hyperexcitability and aberrant action potential firing. Response to toxins that are selective for KCNA2-containing potassium channels suggests that in Purkinje cells, dendritic subthreshold KCNA2-containing potassium channels prevent random spontaneous calcium spikes, suppressing dendritic hyperexcitability without hindering the generation of somatic action potentials, and thereby play an important role in motor coordination. Plays a role in the induction of long-term potentiation of neuron excitability in the CA3 layer of the hippocampus. May function as down-stream effector for G protein-coupled receptors and inhibit GABAergic inputs to basolateral amygdala neurons. May contribute to the regulation of neurotransmitter release, such as gamma-aminobutyric acid (GABA). Contributes to the regulation of the axonal release of the neurotransmitter dopamine. Reduced KCNA2 expression plays a role in the perception of neuropathic pain after peripheral nerve injury, but not acute pain. Plays a role in the regulation of the time spent in non-rapid eye movement (NREM) sleep. This is Potassium voltage-gated channel subfamily A member 2 (KCNA2) from Oryctolagus cuniculus (Rabbit).